The sequence spans 896 residues: Protein translocase subunit SecA (896 aa).

ATP contacts are provided by residues Gln-87, 105–109, and Asp-512; that span reads GEGKT. The disordered stretch occupies residues 867-889; sequence QEPARSNRVAGRNDPCPCGSGKK. Positions 882, 884, 893, and 894 each coordinate Zn(2+).

The protein belongs to the SecA family. Monomer and homodimer. Part of the essential Sec protein translocation apparatus which comprises SecA, SecYEG and auxiliary proteins SecDF-YajC and YidC. Zn(2+) serves as cofactor.

Its subcellular location is the cell inner membrane. The protein resides in the cytoplasm. The enzyme catalyses ATP + H2O + cellular proteinSide 1 = ADP + phosphate + cellular proteinSide 2.. Its function is as follows. Part of the Sec protein translocase complex. Interacts with the SecYEG preprotein conducting channel. Has a central role in coupling the hydrolysis of ATP to the transfer of proteins into and across the cell membrane, serving as an ATP-driven molecular motor driving the stepwise translocation of polypeptide chains across the membrane. The chain is Protein translocase subunit SecA from Pelobacter propionicus (strain DSM 2379 / NBRC 103807 / OttBd1).